Here is a 267-residue protein sequence, read N- to C-terminus: Phosphate import ATP-binding protein PstB 2 (267 aa).

Residues 21-262 (LSTKDVHVYY…AKLQSTNDYV (242 aa)) form the ABC transporter domain. 53–60 (GPSGSGKS) is a binding site for ATP.

The protein belongs to the ABC transporter superfamily. Phosphate importer (TC 3.A.1.7) family. The complex is composed of two ATP-binding proteins (PstB), two transmembrane proteins (PstC and PstA) and a solute-binding protein (PstS).

It localises to the cell membrane. The enzyme catalyses phosphate(out) + ATP + H2O = ADP + 2 phosphate(in) + H(+). In terms of biological role, part of the ABC transporter complex PstSACB involved in phosphate import. Responsible for energy coupling to the transport system. This chain is Phosphate import ATP-binding protein PstB 2, found in Streptococcus pneumoniae serotype 4 (strain ATCC BAA-334 / TIGR4).